The chain runs to 262 residues: Small ribosomal subunit protein eS4 (262 aa).

Positions 42 to 104 constitute an S4 RNA-binding domain; the sequence is LPLILILRNR…TNEDFRLLYD (63 aa).

This sequence belongs to the eukaryotic ribosomal protein eS4 family.

It localises to the cytoplasm. This is Small ribosomal subunit protein eS4 (RPS4) from Gossypium hirsutum (Upland cotton).